The chain runs to 127 residues: uncharacterized protein (127 aa).

The segment covering 1–13 has biased composition (polar residues); sequence MEAGNRSGTPQHR. The disordered stretch occupies residues 1 to 26; the sequence is MEAGNRSGTPQHRQLSEIRQDLSSSP.

This is an uncharacterized protein from Saccharomyces cerevisiae (strain ATCC 204508 / S288c) (Baker's yeast).